The primary structure comprises 517 residues: Ribose import ATP-binding protein RbsA 1 (517 aa).

ABC transporter domains are found at residues 11 to 251 (LEMR…VGRD) and 263 to 507 (YDPG…ALAT). 43 to 50 (GENGAGKS) contacts ATP.

It belongs to the ABC transporter superfamily. Ribose importer (TC 3.A.1.2.1) family. In terms of assembly, the complex is composed of an ATP-binding protein (RbsA), two transmembrane proteins (RbsC) and a solute-binding protein (RbsB).

Its subcellular location is the cell inner membrane. It catalyses the reaction D-ribose(out) + ATP + H2O = D-ribose(in) + ADP + phosphate + H(+). Part of the ABC transporter complex RbsABC involved in ribose import. Responsible for energy coupling to the transport system. This Burkholderia ambifaria (strain ATCC BAA-244 / DSM 16087 / CCUG 44356 / LMG 19182 / AMMD) (Burkholderia cepacia (strain AMMD)) protein is Ribose import ATP-binding protein RbsA 1.